The sequence spans 363 residues: MAP kinase kinase skh1/pek1 (363 aa).

Residues 79–343 enclose the Protein kinase domain; that stretch reads ILYMNSLGEG…PQKMLTHPWV (265 aa). Residues 85 to 93 and Lys108 contribute to the ATP site; that span reads LGEGVSGSV. Asp206 (proton acceptor) is an active-site residue. Ser234 is subject to Phosphoserine. Residue Thr238 is modified to Phosphothreonine.

The protein belongs to the protein kinase superfamily. STE Ser/Thr protein kinase family. MAP kinase kinase subfamily.

It catalyses the reaction L-seryl-[protein] + ATP = O-phospho-L-seryl-[protein] + ADP + H(+). The enzyme catalyses L-threonyl-[protein] + ATP = O-phospho-L-threonyl-[protein] + ADP + H(+). The catalysed reaction is L-tyrosyl-[protein] + ATP = O-phospho-L-tyrosyl-[protein] + ADP + H(+). With respect to regulation, activated by mkh1. Its function is as follows. Involved in the mkh1 signal transduction pathway that plays a role in cell wall integrity. Activates spm1/pmk1 via phosphorylation. In Schizosaccharomyces pombe (strain 972 / ATCC 24843) (Fission yeast), this protein is MAP kinase kinase skh1/pek1 (skh1).